The sequence spans 513 residues: GMP synthase [glutamine-hydrolyzing] (513 aa).

One can recognise a Glutamine amidotransferase type-1 domain in the interval 3-200; it reads SVLVLDFGSQ…LIDIAGITPD (198 aa). C80 (nucleophile) is an active-site residue. Residues H174 and E176 contribute to the active site. Residues 201–388 enclose the GMPS ATP-PPase domain; the sequence is WSPKHFIDHQ…LGIAEDILMR (188 aa). 228 to 234 provides a ligand contact to ATP; it reads SGGVDSS.

Homodimer.

The catalysed reaction is XMP + L-glutamine + ATP + H2O = GMP + L-glutamate + AMP + diphosphate + 2 H(+). Its pathway is purine metabolism; GMP biosynthesis; GMP from XMP (L-Gln route): step 1/1. Its function is as follows. Catalyzes the synthesis of GMP from XMP. The polypeptide is GMP synthase [glutamine-hydrolyzing] (Chlorobium limicola (strain DSM 245 / NBRC 103803 / 6330)).